A 425-amino-acid polypeptide reads, in one-letter code: Acyl-lipid (8-3)-desaturase (425 aa).

Residues 1–25 (MPPRDSYSYAAPPSAQLHEVDTPQE) form a disordered region. The Cytochrome b5 heme-binding domain occupies 18 to 93 (HEVDTPQEHD…SRPVHKGYSP (76 aa)). Positions 47 and 69 each coordinate heme. The helical transmembrane segment at 134–154 (VAGAALIWHGYTFAGIAMLGV) threads the bilayer. Positions 164–168 (HEGGH) match the Histidine box-1 motif. A helical transmembrane segment spans residues 175-197 (IAFDRAIQVACYGLGCGMSGAWW). A Histidine box-2 motif is present at residues 201 to 206 (HNKHHA). A run of 2 helical transmembrane segments spans residues 241–261 (WLSM…ALGW) and 297–317 (GAGY…MYIF). The short motif at 365–369 (QIEHH) is the Histidine box-3 element.

Belongs to the fatty acid desaturase type 1 family. Fe(2+) serves as cofactor.

It is found in the membrane. The catalysed reaction is an (8Z,11Z,14Z)-icosatrienoyl-containing glycerolipid + 2 Fe(II)-[cytochrome b5] + O2 + 2 H(+) = (5Z,8Z,11Z,14Z)-eicosatetraenoyl-containing glycerolipid + 2 Fe(III)-[cytochrome b5] + 2 H2O. It carries out the reaction an (8Z,11Z,14Z,17Z)-eicosatetraenoyl-containing glycerolipid + 2 Fe(II)-[cytochrome b5] + O2 + 2 H(+) = a (5Z,8Z,11Z,14Z,17Z)-eicosapentaenoyl-containing glycerolipid + 2 Fe(III)-[cytochrome b5] + 2 H2O. In terms of biological role, fatty acid desaturase that introduces a cis double bond at the 5-position in 20-carbon polyunsaturated fatty acids incorporated in a glycerolipid that contain a Delta(8) double bond. This Rebecca salina (Marine microalga) protein is Acyl-lipid (8-3)-desaturase.